The sequence spans 501 residues: MSSSGTPDLPVLLTDLKFQYTKIFINNEWHDSVSGKKFPVFNPATEEKLCEVEEGDKEDVNKAVAAARQAFQIGSPWRTMDASERGRLLYKLADLVERDRLILATMESMNGGKLFSNAYLMDLGGCLKTLRYCAGWADKIQGRTIPSDGNFFTYTRHEPVGVCGQILPWNFPLLMFLWKIAPALSCGNTVVVKPAEQTPLSALHVATLIKEAGFPPGVVNIVPGYGPTAGAAISSHMDIDKVAFTGSTEVGKLIKEAAGKSNLKRVTLELGGKSPFIVFADADLETALEVTHQALFYHQGQCCVAASRLFVEESIYDEFVRRSVERAKKYVLGNPLTPGVSQGPQIDKEQYDKILDLIESGKKEGAKLECGGGPWGNKGYFIQPTVFSNVSDEMRIAKEEIFGPVQQIMKFKSLDDVIKRANNTTYGLFAGSFTKDLDKAITVSAALQAGTVWVNCYGVVSAQCPFGGFKMSGNGREMGEYGFHEYTEVKTVTVKISQKNS.

The residue at position 2 (Ser2) is an N-acetylserine. N6-acetyllysine is present on residues Lys91 and Lys128. Residues Leu167–Asn170, Lys193–Glu196, Gly226–Pro227, and Gly246–Ser247 each bind NAD(+). Lys252 is modified (N6-acetyllysine). Glu269 acts as the Proton acceptor in catalysis. An NAD(+)-binding site is contributed by Glu269–Gly271. The Nucleophile role is filled by Cys303. The segment at Leu336 to Ser501 is mediates interaction with PRMT3. Thr337 carries the post-translational modification Phosphothreonine. Glu349 to Lys353 is an NAD(+) binding site. 2 positions are modified to N6-acetyllysine: Lys353 and Lys367. Glu400 to Phe402 serves as a coordination point for NAD(+). Lys410 carries the N6-acetyllysine modification. Position 413 is a phosphoserine (Ser413). Lys419, Lys435, and Lys495 each carry N6-acetyllysine.

This sequence belongs to the aldehyde dehydrogenase family. In terms of assembly, homotetramer. Interacts with PRMT3; the interaction is direct, inhibits ALDH1A1 aldehyde dehydrogenase activity and is independent of the methyltransferase activity of PRMT3. In terms of processing, the N-terminus is blocked most probably by acetylation.

The protein localises to the cytoplasm. The protein resides in the cytosol. It localises to the cell projection. Its subcellular location is the axon. The enzyme catalyses an aldehyde + NAD(+) + H2O = a carboxylate + NADH + 2 H(+). It carries out the reaction all-trans-retinal + NAD(+) + H2O = all-trans-retinoate + NADH + 2 H(+). It catalyses the reaction 9-cis-retinal + NAD(+) + H2O = 9-cis-retinoate + NADH + 2 H(+). The catalysed reaction is 11-cis-retinal + NAD(+) + H2O = 11-cis-retinoate + NADH + 2 H(+). The enzyme catalyses 13-cis-retinal + NAD(+) + H2O = 13-cis-retinoate + NADH + 2 H(+). It carries out the reaction 3-deoxyglucosone + NAD(+) + H2O = 2-dehydro-3-deoxy-D-gluconate + NADH + 2 H(+). It catalyses the reaction (E)-4-hydroxynon-2-enal + NAD(+) + H2O = (E)-4-hydroxynon-2-enoate + NADH + 2 H(+). The catalysed reaction is malonaldehyde + NAD(+) + H2O = 3-oxopropanoate + NADH + 2 H(+). The enzyme catalyses hexanal + NAD(+) + H2O = hexanoate + NADH + 2 H(+). It carries out the reaction propanal + NAD(+) + H2O = propanoate + NADH + 2 H(+). It catalyses the reaction acetaldehyde + NAD(+) + H2O = acetate + NADH + 2 H(+). The catalysed reaction is benzaldehyde + NAD(+) + H2O = benzoate + NADH + 2 H(+). The enzyme catalyses 4-aminobutanal + NAD(+) + H2O = 4-aminobutanoate + NADH + 2 H(+). The protein operates within cofactor metabolism; retinol metabolism. Functionally, cytosolic dehydrogenase that catalyzes the irreversible oxidation of a wide range of aldehydes to their corresponding carboxylic acid. Functions downstream of retinol dehydrogenases and catalyzes the oxidation of retinaldehyde into retinoic acid, the second step in the oxidation of retinol/vitamin A into retinoic acid. This pathway is crucial to control the levels of retinol and retinoic acid, two important molecules which excess can be teratogenic and cytotoxic. Also oxidizes aldehydes resulting from lipid peroxidation like (E)-4-hydroxynon-2-enal/HNE, malonaldehyde and hexanal that form protein adducts and are highly cytotoxic. By participating for instance to the clearance of (E)-4-hydroxynon-2-enal/HNE in the lens epithelium prevents the formation of HNE-protein adducts and lens opacification. Also functions downstream of fructosamine-3-kinase in the fructosamine degradation pathway by catalyzing the oxidation of 3-deoxyglucosone, the carbohydrate product of fructosamine 3-phosphate decomposition, which is itself a potent glycating agent that may react with lysine and arginine side-chains of proteins. Also has an aminobutyraldehyde dehydrogenase activity and is probably part of an alternative pathway for the biosynthesis of GABA/4-aminobutanoate in midbrain, thereby playing a role in GABAergic synaptic transmission. The protein is Aldehyde dehydrogenase 1A1 of Equus caballus (Horse).